The sequence spans 259 residues: Kallikrein 1-related peptidase b22 (259 aa).

The signal sequence occupies residues 1-17 (MRFLILFLTLSLGGIDA). Residues 18-24 (APPVQSR) constitute a propeptide, activation peptide. A Peptidase S1 domain is found at 25 to 256 (ILGGFKCEKN…FTSWIKDTMA (232 aa)). 5 disulfide bridges follow: Cys31–Cys171, Cys50–Cys66, Cys150–Cys217, Cys182–Cys196, and Cys207–Cys232. Residue His65 is the Charge relay system of the active site. A glycan (N-linked (GlcNAc...) asparagine) is linked at Asn102. Asp118 functions as the Charge relay system in the catalytic mechanism. Ser211 (charge relay system) is an active-site residue.

The protein belongs to the peptidase S1 family. Kallikrein subfamily.

It carries out the reaction Preferential cleavage of Arg-|-Xaa bonds in small molecule substrates. Highly selective action to release kallidin (lysyl-bradykinin) from kininogen involves hydrolysis of Met-|-Xaa or Leu-|-Xaa.. Functionally, glandular kallikreins cleave Met-Lys and Arg-Ser bonds in kininogen to release Lys-bradykinin. In Mus musculus (Mouse), this protein is Kallikrein 1-related peptidase b22 (Klk1b22).